The sequence spans 407 residues: MKLAFICTEKLPAPAVRGGAIQMMIDGVTPYFSSRYDLTIFSIEDPSLPKRETKDGVHYIHLPKEHYREAVAEELRASSFDLIHVFNRPLNVSLYKKASPNSKIVLSLHNEMFSEKKMTFAQGKEVLDNVSMITTVSEFIKQTVIERFPEAEDITKVVYSGVDLNSYPPVWTMKGSAVRKTYRKKYGIEDKKVILFAGRLSPTKGPHLLIHSMRRILQQHPDAVLVIAGGKWFSDDSENQYVTYLRTLALPYRDHIIFTKFIPADDIPNLFLMADVFVCSSQWNEPLARVNYEAMAAGTPLITTNRGGNGEVVKHEVTGLVIDSYNKPSSFAKAIDRAFTDQELMNKMTKNARKHVEALFTFTHAAKRLNTVYQSVLTPKNKQFPPPFLTQNFDLSSINQLFVKAKT.

It belongs to the glycosyltransferase group 1 family. Glycosyltransferase 4 subfamily.

The protein is Putative glycosyltransferase YtcC (ytcC) of Bacillus subtilis (strain 168).